Reading from the N-terminus, the 491-residue chain is Protein DETOXIFICATION 20 (491 aa).

12 helical membrane-spanning segments follow: residues 37–57 (LWVVAAPAIFTRYSTFGVSMV), 75–95 (ITFTILLRFSNGILLGMAGAL), 120–140 (IVLTGGTICLMPVFIFAGPIL), 156–176 (LALWVIGINFSFVPSFTCQMF), 185–205 (IISYVTAVSLGLHVFFSWLLV), 214–234 (GAMTSMLIAFWLPIIVQLLYV), 265–285 (GGMLCLELWYNSVLVLLTGNL), 296–316 (AICISINALEMMIALGFLAAV), 337–357 (LIAVFTSLSIGIVLFFVFLFL), 381–401 (LLAFSILLNSVQPVLSGVAIG), 413–433 (LACYYLVGIPIGVILGYVVGL), and 438–458 (VWIGMLFGIFVQTCVLTVMTL).

Belongs to the multi antimicrobial extrusion (MATE) (TC 2.A.66.1) family.

It is found in the membrane. The sequence is that of Protein DETOXIFICATION 20 from Arabidopsis thaliana (Mouse-ear cress).